The chain runs to 469 residues: ATP synthase subunit beta (469 aa).

Residue 155 to 162 (GGAGVGKT) participates in ATP binding.

It belongs to the ATPase alpha/beta chains family. As to quaternary structure, F-type ATPases have 2 components, CF(1) - the catalytic core - and CF(0) - the membrane proton channel. CF(1) has five subunits: alpha(3), beta(3), gamma(1), delta(1), epsilon(1). CF(0) has three main subunits: a(1), b(2) and c(9-12). The alpha and beta chains form an alternating ring which encloses part of the gamma chain. CF(1) is attached to CF(0) by a central stalk formed by the gamma and epsilon chains, while a peripheral stalk is formed by the delta and b chains.

It localises to the cell inner membrane. It catalyses the reaction ATP + H2O + 4 H(+)(in) = ADP + phosphate + 5 H(+)(out). Produces ATP from ADP in the presence of a proton gradient across the membrane. The catalytic sites are hosted primarily by the beta subunits. This Helicobacter pylori (strain ATCC 700392 / 26695) (Campylobacter pylori) protein is ATP synthase subunit beta.